Here is a 1021-residue protein sequence, read N- to C-terminus: Probable LRR receptor-like serine/threonine-protein kinase RFK1 (1021 aa).

The first 39 residues, 1-39 (MISLYQILAEKKKKKKNDLNIFAFSVFAIICFKFYSVNA), serve as a signal peptide directing secretion. At 41–625 (KLPQQEVDAL…PKTGMSPGAY (585 aa)) the chain is on the extracellular side. Asn96 carries N-linked (GlcNAc...) asparagine glycosylation. LRR repeat units lie at residues 99–122 (DCHV…IVKL) and 123–146 (PYLR…WASS). N-linked (GlcNAc...) asparagine glycosylation is found at Asn136, Asn147, and Asn168. LRR repeat units lie at residues 148–168 (LTFI…EFGN), 169–192 (SSLT…LGNL), 193–216 (VHLK…LARL), 218–240 (NMTD…IQNW), and 241–266 (KQLE…VLSN). Residue Asn218 is glycosylated (N-linked (GlcNAc...) asparagine). N-linked (GlcNAc...) asparagine glycans are attached at residues Asn287 and Asn300. LRR repeat units lie at residues 288–312 (VTGL…LSHL), 313–336 (KELE…AQAE), 338–359 (LRFI…LLRD), and 361–381 (ITVD…RACR). N-linked (GlcNAc...) asparagine glycans are attached at residues Asn486 and Asn512. Residues 626-646 (IAIGIGAPCLIIFILGFLWIC) traverse the membrane as a helical segment. At 647-1021 (GCLPRCGRQR…QERKKEESRP (375 aa)) the chain is on the cytoplasmic side. The residue at position 670 (Thr670) is a Phosphothreonine. The 276-residue stretch at 681–956 (FNPTNKIGEG…EVVAMLEGLY (276 aa)) folds into the Protein kinase domain. ATP is bound by residues 687–695 (IGEGGFGAV) and Lys709. Residue Tyr754 is modified to Phosphotyrosine. Asp807 serves as the catalytic Proton acceptor. Ser840 carries the post-translational modification Phosphoserine. Phosphothreonine is present on residues Thr841 and Thr846. Tyr854 is modified (phosphotyrosine). The segment at 985–1021 (ENNSKTQCSVKSYPSSSSTSSGAGQAVQERKKEESRP) is disordered. The span at 993-1005 (SVKSYPSSSSTSS) shows a compositional bias: low complexity. The segment covering 1012-1021 (QERKKEESRP) has biased composition (basic and acidic residues).

This sequence belongs to the protein kinase superfamily. Ser/Thr protein kinase family. Mostly expressed in flower buds, especially in stamens.

It localises to the membrane. The catalysed reaction is L-seryl-[protein] + ATP = O-phospho-L-seryl-[protein] + ADP + H(+). It catalyses the reaction L-threonyl-[protein] + ATP = O-phospho-L-threonyl-[protein] + ADP + H(+). The sequence is that of Probable LRR receptor-like serine/threonine-protein kinase RFK1 (RKF1) from Arabidopsis thaliana (Mouse-ear cress).